Consider the following 346-residue polypeptide: Small ribosomal subunit biogenesis GTPase RsgA 1 (346 aa).

The CP-type G domain maps to 93–248; that stretch reads AEQLIAANFD…VIDTPGMREF (156 aa). GTP contacts are provided by residues 138 to 141 and 190 to 198; these read TKAD and GSSGVGKSS. Residues C271, C276, H278, and C284 each coordinate Zn(2+).

It belongs to the TRAFAC class YlqF/YawG GTPase family. RsgA subfamily. In terms of assembly, monomer. Associates with 30S ribosomal subunit, binds 16S rRNA. It depends on Zn(2+) as a cofactor.

It is found in the cytoplasm. In terms of biological role, one of several proteins that assist in the late maturation steps of the functional core of the 30S ribosomal subunit. Helps release RbfA from mature subunits. May play a role in the assembly of ribosomal proteins into the subunit. Circularly permuted GTPase that catalyzes slow GTP hydrolysis, GTPase activity is stimulated by the 30S ribosomal subunit. The polypeptide is Small ribosomal subunit biogenesis GTPase RsgA 1 (Listeria monocytogenes serovar 1/2a (strain ATCC BAA-679 / EGD-e)).